A 95-amino-acid polypeptide reads, in one-letter code: uncharacterized protein (95 aa).

The tract at residues 1–64 is disordered; that stretch reads MEIDDIFASK…PKGASGRKRT (64 aa). Residues 18–28 are compositionally biased toward basic and acidic residues; that stretch reads KSNDSKSEAKA. The span at 35 to 49 shows a compositional bias: polar residues; sequence TKSTPSRPKPTNNQD.

This is an uncharacterized protein from Schizosaccharomyces pombe (strain 972 / ATCC 24843) (Fission yeast).